The following is a 92-amino-acid chain: MAPLHHILVLCVGFLTTATAEAPQEHDPFTYDYQSLRIGGLIIAGILFILGILIVLSRRCRCKFNQQQRTGEPDEEEGTFRSSIRRLSTRRR.

Positions M1 to A20 are cleaved as a signal peptide. Residues E21–S35 lie on the Extracellular side of the membrane. The helical transmembrane segment at L36–L56 threads the bilayer. At S57–R92 the chain is on the cytoplasmic side. C60 carries the S-palmitoyl cysteine lipid modification. S-glutathionyl cysteine; alternate is present on C62. The S-palmitoyl cysteine; alternate moiety is linked to residue C62. Positions N65–R92 are disordered. T79 bears the Phosphothreonine mark. At S82 the chain carries Phosphoserine. 2 positions are modified to phosphoserine; by PKA and PKC: S83 and S88. Residues S83–R92 show a composition bias toward basic residues. At T89 the chain carries Phosphothreonine; by PKC.

The protein belongs to the FXYD family. Homotetramer. Monomer. Regulatory subunit of the sodium/potassium-transporting ATPase (NKA) which is composed of a catalytic alpha subunit, a non-catalytic beta subunit and an additional regulatory subunit. The monomeric form associates with NKA while the oligomeric form does not. Interacts with the catalytic alpha-1 subunit ATP1A1. Also interacts with the catalytic alpha-2 and alpha-3 subunits ATP1A2 and ATP1A3. Very little interaction with the alpha subunits ATP1A1, ATP1A2 or ATP1A3 when phosphorylated at Ser-83. Interacts with non-catalytic beta-1 subunit ATP1B1. Oxidative stress decreases interaction with ATP1A1 but increases interaction with ATP1B1. Major plasma membrane substrate for cAMP-dependent protein kinase (PKA) and protein kinase C (PKC) in several different tissues. Phosphorylated in response to insulin and adrenergic stimulation. Phosphorylation at Ser-88 stimulates sodium/potassium-transporting ATPase activity while the unphosphorylated form inhibits sodium/potassium-transporting ATPase activity. Phosphorylation increases tetramerization, decreases binding to ATP1A1 and reduces inhibition of ATP1A1 activity. Phosphorylation at Ser-83 leads to greatly reduced interaction with ATP1A1, ATP1A2 and ATP1A3. May be phosphorylated by DMPK. In terms of processing, palmitoylation increases half-life and stability and is enhanced upon phosphorylation at Ser-88 by PKA. As to expression, present in heart, esophagus, stomach, aorta, skeletal muscle, smooth muscle, and liver but absent from brain and kidney.

It localises to the cell membrane. It is found in the sarcolemma. Its subcellular location is the apical cell membrane. The protein resides in the membrane. The protein localises to the caveola. It localises to the T-tubule. Associates with and regulates the activity of the sodium/potassium-transporting ATPase (NKA) which transports Na(+) out of the cell and K(+) into the cell. Inhibits NKA activity in its unphosphorylated state and stimulates activity when phosphorylated. Reduces glutathionylation of the NKA beta-1 subunit ATP1B1, thus reversing glutathionylation-mediated inhibition of ATP1B1. Contributes to female sexual development by maintaining the excitability of neurons which secrete gonadotropin-releasing hormone. This is Phospholemman from Canis lupus familiaris (Dog).